A 217-amino-acid chain; its full sequence is Ribose-5-phosphate isomerase A (217 aa).

Substrate is bound by residues 28 to 31 (TGST), 81 to 84 (DGAD), and 94 to 97 (KGGG). Glu-103 acts as the Proton acceptor in catalysis. Lys-121 is a binding site for substrate.

It belongs to the ribose 5-phosphate isomerase family. As to quaternary structure, homodimer.

The catalysed reaction is aldehydo-D-ribose 5-phosphate = D-ribulose 5-phosphate. It participates in carbohydrate degradation; pentose phosphate pathway; D-ribose 5-phosphate from D-ribulose 5-phosphate (non-oxidative stage): step 1/1. In terms of biological role, catalyzes the reversible conversion of ribose-5-phosphate to ribulose 5-phosphate. The sequence is that of Ribose-5-phosphate isomerase A from Aeromonas hydrophila subsp. hydrophila (strain ATCC 7966 / DSM 30187 / BCRC 13018 / CCUG 14551 / JCM 1027 / KCTC 2358 / NCIMB 9240 / NCTC 8049).